A 61-amino-acid chain; its full sequence is Small ribosomal subunit protein uS14B (61 aa).

Residues C24, C27, C40, and C43 each contribute to the Zn(2+) site.

This sequence belongs to the universal ribosomal protein uS14 family. Zinc-binding uS14 subfamily. As to quaternary structure, part of the 30S ribosomal subunit. Contacts proteins S3 and S10. The cofactor is Zn(2+).

In terms of biological role, binds 16S rRNA, required for the assembly of 30S particles and may also be responsible for determining the conformation of the 16S rRNA at the A site. The polypeptide is Small ribosomal subunit protein uS14B (Streptococcus pyogenes serotype M6 (strain ATCC BAA-946 / MGAS10394)).